The primary structure comprises 842 residues: Glycogen phosphorylase, muscle form (842 aa).

Residue S2 is modified to N-acetylserine. S15 is modified (phosphoserine; by PHK; in form phosphorylase A). AMP-binding residues include D43 and Y76. Y204 and Y227 each carry phosphotyrosine. AMP is bound at residue 310-319 (RRFKSSKFGS). S430 carries the post-translational modification Phosphoserine. The residue at position 473 (Y473) is a Phosphotyrosine. S514 is modified (phosphoserine). Position 681 is an N6-(pyridoxal phosphate)lysine (K681). Phosphoserine occurs at positions 747 and 748.

The protein belongs to the glycogen phosphorylase family. In terms of assembly, homodimer. Homotetramer; to form the enzymatically active phosphorylase A. Requires pyridoxal 5'-phosphate as cofactor. Phosphorylation of Ser-15 converts phosphorylase B (unphosphorylated) to phosphorylase A.

It catalyses the reaction [(1-&gt;4)-alpha-D-glucosyl](n) + phosphate = [(1-&gt;4)-alpha-D-glucosyl](n-1) + alpha-D-glucose 1-phosphate. Its activity is regulated as follows. Allosterically regulated through the non-covalent binding of metabolites, being activated by AMP and inhibited by ATP, ADP, and glucose-6-phosphate. The activity is also controlled by post-translational modifications including phosphorylation. Its function is as follows. Allosteric enzyme that catalyzes the rate-limiting step in glycogen catabolism, the phosphorolytic cleavage of glycogen to produce glucose-1-phosphate, and plays a central role in maintaining cellular and organismal glucose homeostasis. This chain is Glycogen phosphorylase, muscle form, found in Mus musculus (Mouse).